We begin with the raw amino-acid sequence, 63 residues long: Large ribosomal subunit protein uL29 (63 aa).

This sequence belongs to the universal ribosomal protein uL29 family.

This is Large ribosomal subunit protein uL29 from Escherichia coli O8 (strain IAI1).